The following is a 206-amino-acid chain: Small ribosomal subunit protein uS4 (206 aa).

One can recognise an S4 RNA-binding domain in the interval 96–156 (CRLDNVVYRM…EKAKNQLRIV (61 aa)).

It belongs to the universal ribosomal protein uS4 family. Part of the 30S ribosomal subunit. Contacts protein S5. The interaction surface between S4 and S5 is involved in control of translational fidelity.

In terms of biological role, one of the primary rRNA binding proteins, it binds directly to 16S rRNA where it nucleates assembly of the body of the 30S subunit. With S5 and S12 plays an important role in translational accuracy. The chain is Small ribosomal subunit protein uS4 from Pseudomonas fluorescens (strain Pf0-1).